The chain runs to 318 residues: Solute carrier family 25 member 34 (318 aa).

3 Solcar repeats span residues 18–111 (VSPA…ACQA), 115–208 (QQPG…AKAW), and 218–309 (DSWL…LRKL). 6 consecutive transmembrane segments (helical) span residues 21-41 (AVDL…TNPL), 59-79 (TYPR…RADG), 112-134 (GLTQ…GAFV), 184-205 (VGAA…FTSA), 220-240 (WLAT…VMAP), and 292-315 (LGPH…RAQH).

The protein belongs to the mitochondrial carrier (TC 2.A.29) family.

It localises to the mitochondrion inner membrane. It catalyses the reaction a dicarboxylate(in) + sulfate(out) = a dicarboxylate(out) + sulfate(in). Its function is as follows. Putative antiporter that exchanges dicarboxylates and sulfur oxoanions across the inner membrane of mitochondria. The polypeptide is Solute carrier family 25 member 34 (Slc25a34) (Rattus norvegicus (Rat)).